The sequence spans 592 residues: ATP-binding protein Uup (592 aa).

ABC transporter domains lie at methionine 1 to lysine 221 and phenylalanine 289 to isoleucine 516. ATP contacts are provided by residues glycine 36–serine 43 and glycine 321–serine 328. The stretch at isoleucine 516 to glutamine 550 forms a coiled coil. The segment at phenylalanine 518–leucine 592 is C-terminal domain (CTD), binds DNA.

Belongs to the ABC transporter superfamily. ABCF family. Uup subfamily.

The protein localises to the cytoplasm. It catalyses the reaction ATP + H2O = ADP + phosphate + H(+). Functionally, probably plays a role in ribosome assembly or function. May be involved in resolution of branched DNA intermediates that result from template switching in postreplication gaps. Binds DNA and has ATPase activity. The protein is ATP-binding protein Uup of Buchnera aphidicola subsp. Schizaphis graminum (strain Sg).